A 1015-amino-acid chain; its full sequence is Putative calcium-transporting ATPase 7, plasma membrane-type (1015 aa).

Met-1 carries the post-translational modification N-acetylmethionine. The Cytoplasmic segment spans residues 1 to 161; the sequence is MESYLNSNFD…NKFAESELRS (161 aa). The interval 20-31 is interaction with calmodulin; that stretch reads VLEKWRNLCSVV. Ser-45 carries the phosphoserine; by CPK modification. The chain crosses the membrane as a helical span at residues 162–182; that stretch reads FWVFVWEALQDMTLMILGVCA. Over 183–200 the chain is Lumenal; sequence FVSLIVGIATEGWPQGSH. The chain crosses the membrane as a helical span at residues 201-221; it reads DGLGIVASILLVVFVTATSDY. The Cytoplasmic portion of the chain corresponds to 222 to 349; that stretch reads RQSLQFRDLD…DDETPLQVKL (128 aa). Residues 350 to 369 traverse the membrane as a helical segment; that stretch reads NGVATIIGKIGLSFAIVTFA. Residues 370 to 399 are Lumenal-facing; it reads VLVQGMFMRKLSLGPHWWWSGDDALELLEY. The chain crosses the membrane as a helical span at residues 400–417; that stretch reads FAIAVTIVVVAVPEGLPL. The Cytoplasmic segment spans residues 418–811; that stretch reads AVTLSLAFAM…KWGRSVYINI (394 aa). Asp-455 functions as the 4-aspartylphosphate intermediate in the catalytic mechanism. Mg(2+) contacts are provided by Asp-756 and Asp-760. The helical transmembrane segment at 812-830 threads the bilayer; that stretch reads QKFVQFQLTVNVVALIVNF. The Lumenal segment spans residues 831–841; sequence SSACLTGSAPL. A helical transmembrane segment spans residues 842–862; the sequence is TAVQLLWVNMIMDTLGALALA. The Cytoplasmic segment spans residues 863–882; the sequence is TEPPNNELMKRMPVGRRGNF. The chain crosses the membrane as a helical span at residues 883-905; the sequence is ITNAMWRNILGQAVYQFIIIWIL. Residues 906 to 917 lie on the Lumenal side of the membrane; it reads QAKGKSMFGLVG. Residues 918 to 939 traverse the membrane as a helical segment; that stretch reads SDSTLVLNTLIFNCFVFCQVFN. The Cytoplasmic segment spans residues 940–957; the sequence is EVSSREMEEIDVFKGILD. Residues 958–979 traverse the membrane as a helical segment; it reads NYVFVVVIGATVFFQIIIIEFL. Residues 980–989 are Lumenal-facing; that stretch reads GTFASTTPLT. A helical transmembrane segment spans residues 990-1011; it reads IVQWFFSIFVGFLGMPIAAGLK. Over 1012–1015 the chain is Cytoplasmic; that stretch reads KIPV.

This sequence belongs to the cation transport ATPase (P-type) (TC 3.A.3) family. Type IIB subfamily.

The protein resides in the membrane. It carries out the reaction Ca(2+)(in) + ATP + H2O = Ca(2+)(out) + ADP + phosphate + H(+). Activated by calmodulin. Its function is as follows. This magnesium-dependent enzyme catalyzes the hydrolysis of ATP coupled with the translocation of calcium from the cytosol out of the cell or into organelles. This chain is Putative calcium-transporting ATPase 7, plasma membrane-type (ACA7), found in Arabidopsis thaliana (Mouse-ear cress).